A 220-amino-acid chain; its full sequence is Phosphoenolpyruvate guanylyltransferase (220 aa).

The phosphoenolpyruvate site is built by threonine 154, glycine 169, and serine 172.

It belongs to the CofC family.

It catalyses the reaction phosphoenolpyruvate + GTP + H(+) = enolpyruvoyl-2-diphospho-5'-guanosine + diphosphate. The protein operates within cofactor biosynthesis; coenzyme F420 biosynthesis. In terms of biological role, guanylyltransferase that catalyzes the activation of phosphoenolpyruvate (PEP) as enolpyruvoyl-2-diphospho-5'-guanosine, via the condensation of PEP with GTP. It is involved in the biosynthesis of coenzyme F420, a hydride carrier cofactor. The sequence is that of Phosphoenolpyruvate guanylyltransferase from Mycolicibacterium paratuberculosis (strain ATCC BAA-968 / K-10) (Mycobacterium paratuberculosis).